Reading from the N-terminus, the 161-residue chain is Urease accessory protein UreE (161 aa).

Residues 133-161 are disordered; the sequence is EPEAGAYQSAPHSHSHAHDHPFVRLPAHS.

The protein belongs to the UreE family.

The protein resides in the cytoplasm. Involved in urease metallocenter assembly. Binds nickel. Probably functions as a nickel donor during metallocenter assembly. The chain is Urease accessory protein UreE from Pseudomonas putida (strain W619).